The following is a 346-amino-acid chain: Probable dual-specificity RNA methyltransferase RlmN (346 aa).

Glu76 functions as the Proton acceptor in the catalytic mechanism. The Radical SAM core domain occupies 97-329 (SYDRATICVS…TFIRKPRGRD (233 aa)). Cys104 and Cys334 are disulfide-bonded. [4Fe-4S] cluster contacts are provided by Cys111, Cys115, and Cys118. S-adenosyl-L-methionine is bound by residues 162–163 (GE), Ser192, 215–217 (SLN), and Asn291. Cys334 functions as the S-methylcysteine intermediate in the catalytic mechanism.

The protein belongs to the radical SAM superfamily. RlmN family. The cofactor is [4Fe-4S] cluster.

Its subcellular location is the cytoplasm. The catalysed reaction is adenosine(2503) in 23S rRNA + 2 reduced [2Fe-2S]-[ferredoxin] + 2 S-adenosyl-L-methionine = 2-methyladenosine(2503) in 23S rRNA + 5'-deoxyadenosine + L-methionine + 2 oxidized [2Fe-2S]-[ferredoxin] + S-adenosyl-L-homocysteine. It carries out the reaction adenosine(37) in tRNA + 2 reduced [2Fe-2S]-[ferredoxin] + 2 S-adenosyl-L-methionine = 2-methyladenosine(37) in tRNA + 5'-deoxyadenosine + L-methionine + 2 oxidized [2Fe-2S]-[ferredoxin] + S-adenosyl-L-homocysteine. Its function is as follows. Specifically methylates position 2 of adenine 2503 in 23S rRNA and position 2 of adenine 37 in tRNAs. The protein is Probable dual-specificity RNA methyltransferase RlmN of Koribacter versatilis (strain Ellin345).